The sequence spans 154 residues: MNKKITLNIQIASKKIIFLPKKCQYLIWIRSSLMHVYQSNIKVLIRIVEKSEIKSLNYKFRQKNKATNILSFSYINDKMIDKNYIGDLIICSEIVTEEAKKKNVTLESHWAHITIHGILHLLGYNHDNLNNRIKMEYLETKIMASLNYKNPYIY.

Zn(2+) contacts are provided by His116, His120, and His126.

Belongs to the endoribonuclease YbeY family. Zn(2+) serves as cofactor.

The protein resides in the cytoplasm. Single strand-specific metallo-endoribonuclease involved in late-stage 70S ribosome quality control and in maturation of the 3' terminus of the 16S rRNA. This Buchnera aphidicola subsp. Baizongia pistaciae (strain Bp) protein is Endoribonuclease YbeY.